We begin with the raw amino-acid sequence, 812 residues long: DNA translocase FtsK 1 (812 aa).

Basic residues predominate over residues 1-11 (MTEKSHKKTAK). The tract at residues 1–36 (MTEKSHKKTAKGRAGSPSPTSARNKKADNGARGNKV) is disordered. Positions 25–36 (KKADNGARGNKV) are enriched in basic and acidic residues. The next 5 helical transmembrane spans lie at 63–83 (IGDA…ISLI), 116–136 (VGYY…CVVL), 156–176 (IAAA…YFVL), 184–204 (LPVG…AWLL), and 210–230 (LLII…ISWL). At 231–812 (EFLNGAGRAV…RKILAHKDHL (582 aa)) the chain is on the cytoplasmic side. The FtsK domain maps to 461-670 (GTPVVGDLAK…FTVQSKIDSR (210 aa)). 481–486 (GSGKSV) contributes to the ATP binding site.

The protein belongs to the FtsK/SpoIIIE/SftA family. Homohexamer. Forms a ring that surrounds DNA.

The protein resides in the cell inner membrane. Functionally, essential cell division protein that coordinates cell division and chromosome segregation. The N-terminus is involved in assembly of the cell-division machinery. The C-terminus functions as a DNA motor that moves dsDNA in an ATP-dependent manner towards the dif recombination site, which is located within the replication terminus region. Translocation stops specifically at Xer-dif sites, where FtsK interacts with the Xer recombinase, allowing activation of chromosome unlinking by recombination. FtsK orienting polar sequences (KOPS) guide the direction of DNA translocation. FtsK can remove proteins from DNA as it translocates, but translocation stops specifically at XerCD-dif site, thereby preventing removal of XerC and XerD from dif. The sequence is that of DNA translocase FtsK 1 (ftsK1) from Neisseria meningitidis serogroup B (strain ATCC BAA-335 / MC58).